A 506-amino-acid polypeptide reads, in one-letter code: Bifunctional purine biosynthesis protein PurH (506 aa).

An MGS-like domain is found at M1–C146.

Belongs to the PurH family.

The enzyme catalyses (6R)-10-formyltetrahydrofolate + 5-amino-1-(5-phospho-beta-D-ribosyl)imidazole-4-carboxamide = 5-formamido-1-(5-phospho-D-ribosyl)imidazole-4-carboxamide + (6S)-5,6,7,8-tetrahydrofolate. It carries out the reaction IMP + H2O = 5-formamido-1-(5-phospho-D-ribosyl)imidazole-4-carboxamide. It functions in the pathway purine metabolism; IMP biosynthesis via de novo pathway; 5-formamido-1-(5-phospho-D-ribosyl)imidazole-4-carboxamide from 5-amino-1-(5-phospho-D-ribosyl)imidazole-4-carboxamide (10-formyl THF route): step 1/1. It participates in purine metabolism; IMP biosynthesis via de novo pathway; IMP from 5-formamido-1-(5-phospho-D-ribosyl)imidazole-4-carboxamide: step 1/1. In Nostoc sp. (strain PCC 7120 / SAG 25.82 / UTEX 2576), this protein is Bifunctional purine biosynthesis protein PurH.